A 53-amino-acid chain; its full sequence is Ovomucoid (53 aa).

The region spanning 3-53 (VDCSEYPQPTCTTEHRPVCGSNNETYGNKCNFCNAVVKSNGTLTVSHFGKC) is the Kazal-like domain. 3 cysteine pairs are disulfide-bonded: Cys-5-Cys-35, Cys-13-Cys-32, and Cys-21-Cys-53. N-linked (GlcNAc...) asparagine glycosylation is present at Asn-42.

Its subcellular location is the secreted. The sequence is that of Ovomucoid from Polyplectron bicalcaratum (Grey peacock-pheasant).